Consider the following 374-residue polypeptide: uncharacterized protein (374 aa).

The disordered stretch occupies residues 182–201 (PALGESPQGQKSSASSDKAV). A compositionally biased stretch (polar residues) spans 188-197 (PQGQKSSASS).

This is an uncharacterized protein from Rattus norvegicus (Rat).